We begin with the raw amino-acid sequence, 39 residues long: U1-nemetoxin-Csp1c (39 aa).

Intrachain disulfides connect Cys-1-Cys-15, Cys-8-Cys-19, Cys-14-Cys-36, and Cys-25-Cys-32.

Expressed by the venom gland.

The protein localises to the secreted. Causes paralysis to insect larvae (H.virescens). This toxin is active only on insects. The chain is U1-nemetoxin-Csp1c from Calisoga sp. (Spider).